The sequence spans 431 residues: Phosphoribosylamine--glycine ligase (431 aa).

Positions 109 to 316 constitute an ATP-grasp domain; sequence KDFLARHGIP…LVDLLEAAID (208 aa). Residue 135 to 196 coordinates ATP; it reads VREKGTPIVV…EEFLDGEEAS (62 aa). Mg(2+)-binding residues include Glu-286 and Asn-288.

This sequence belongs to the GARS family. Requires Mg(2+) as cofactor. Mn(2+) serves as cofactor.

It carries out the reaction 5-phospho-beta-D-ribosylamine + glycine + ATP = N(1)-(5-phospho-beta-D-ribosyl)glycinamide + ADP + phosphate + H(+). The protein operates within purine metabolism; IMP biosynthesis via de novo pathway; N(1)-(5-phospho-D-ribosyl)glycinamide from 5-phospho-alpha-D-ribose 1-diphosphate: step 2/2. In Xanthomonas axonopodis pv. citri (strain 306), this protein is Phosphoribosylamine--glycine ligase.